We begin with the raw amino-acid sequence, 253 residues long: 5'/3'-nucleotidase SurE (253 aa).

Residues aspartate 8, aspartate 9, serine 39, and asparagine 92 each contribute to the a divalent metal cation site.

This sequence belongs to the SurE nucleotidase family. A divalent metal cation is required as a cofactor.

The protein resides in the cytoplasm. The enzyme catalyses a ribonucleoside 5'-phosphate + H2O = a ribonucleoside + phosphate. It carries out the reaction a ribonucleoside 3'-phosphate + H2O = a ribonucleoside + phosphate. It catalyses the reaction [phosphate](n) + H2O = [phosphate](n-1) + phosphate + H(+). In terms of biological role, nucleotidase with a broad substrate specificity as it can dephosphorylate various ribo- and deoxyribonucleoside 5'-monophosphates and ribonucleoside 3'-monophosphates with highest affinity to 3'-AMP. Also hydrolyzes polyphosphate (exopolyphosphatase activity) with the preference for short-chain-length substrates (P20-25). Might be involved in the regulation of dNTP and NTP pools, and in the turnover of 3'-mononucleotides produced by numerous intracellular RNases (T1, T2, and F) during the degradation of various RNAs. This is 5'/3'-nucleotidase SurE from Escherichia coli O17:K52:H18 (strain UMN026 / ExPEC).